The following is a 577-amino-acid chain: 2-succinyl-5-enolpyruvyl-6-hydroxy-3-cyclohexene-1-carboxylate synthase (577 aa).

This sequence belongs to the TPP enzyme family. MenD subfamily. As to quaternary structure, homodimer. The cofactor is Mg(2+). Mn(2+) serves as cofactor. It depends on thiamine diphosphate as a cofactor.

The catalysed reaction is isochorismate + 2-oxoglutarate + H(+) = 5-enolpyruvoyl-6-hydroxy-2-succinyl-cyclohex-3-ene-1-carboxylate + CO2. It participates in quinol/quinone metabolism; 1,4-dihydroxy-2-naphthoate biosynthesis; 1,4-dihydroxy-2-naphthoate from chorismate: step 2/7. Its pathway is quinol/quinone metabolism; menaquinone biosynthesis. Its function is as follows. Catalyzes the thiamine diphosphate-dependent decarboxylation of 2-oxoglutarate and the subsequent addition of the resulting succinic semialdehyde-thiamine pyrophosphate anion to isochorismate to yield 2-succinyl-5-enolpyruvyl-6-hydroxy-3-cyclohexene-1-carboxylate (SEPHCHC). In Geobacillus kaustophilus (strain HTA426), this protein is 2-succinyl-5-enolpyruvyl-6-hydroxy-3-cyclohexene-1-carboxylate synthase.